The sequence spans 60 residues: Toxin FS-2 (60 aa).

Disulfide bonds link cysteine 3-cysteine 22, cysteine 17-cysteine 39, cysteine 41-cysteine 52, and cysteine 53-cysteine 58. The important for binding to L-type calcium channels stretch occupies residues cysteine 41–tyrosine 48.

It belongs to the three-finger toxin family. Short-chain subfamily. L-type calcium blocker sub-subfamily. As to expression, expressed by the venom gland.

It localises to the secreted. Functionally, specific blocker of the voltage-dependent L-type calcium channel (Cav1/CACNA1). Inhibits cardiac contractions. This Dendroaspis polylepis polylepis (Black mamba) protein is Toxin FS-2.